A 280-amino-acid polypeptide reads, in one-letter code: Manganese import system permease protein ScaB (280 aa).

Transmembrane regions (helical) follow at residues 18 to 38, 61 to 81, 94 to 114, 139 to 159, 174 to 194, 196 to 216, 222 to 242, and 246 to 266; these read ALIT…FIIL, ILGI…SILI, TAIG…IGVA, TIGV…PLLL, VKIY…TAMQ, VGTI…YLYA, MMLL…FIGY, and IAVG…SFFI.

This sequence belongs to the ABC-3 integral membrane protein family.

The protein localises to the cell membrane. Functionally, part of an ABC transporter complex involved in manganese import. The polypeptide is Manganese import system permease protein ScaB (Streptococcus parasanguinis).